Here is a 354-residue protein sequence, read N- to C-terminus: Transcription factor HHO2 (354 aa).

Over residues 93–102 (VQEEEEEDGE) the composition is skewed to acidic residues. The disordered stretch occupies residues 93-112 (VQEEEEEDGEHESSPELVNN). The span at 103-112 (HESSPELVNN) shows a compositional bias: basic and acidic residues. Residues 212–272 (THRKQRRCWS…HLQKYRLHTR (61 aa)) enclose the HTH myb-type domain. Residues 243 to 268 (PKQIRDHMKVDGLTNDEVKSHLQKYR) constitute a DNA-binding region (H-T-H motif). Positions 324–354 (VAQSPKRSLERSCNSPAASSSTNTNTSTPVS) are disordered. Residues 337 to 354 (NSPAASSSTNTNTSTPVS) are compositionally biased toward low complexity.

It localises to the nucleus. In terms of biological role, probable transcription factor involved in phosphate homeostasis. Involved in the regulation of the developmental response of lateral roots, acquisition and/or mobilization of phosphate and expression of a subset of genes involved in phosphate sensing and signaling pathway. Is a target of the transcription factor PHR1. This Arabidopsis thaliana (Mouse-ear cress) protein is Transcription factor HHO2.